The sequence spans 32 residues: Conotoxin pr6b (32 aa).

4 positions are modified to 4-hydroxyproline: Pro-6, Pro-13, Pro-20, and Pro-29. 3 disulfides stabilise this stretch: Cys-7/Cys-18, Cys-14/Cys-23, and Cys-17/Cys-31.

As to expression, expressed by the venom duct.

It is found in the secreted. Intraperitoneal injection into fish (0.5 nmol) provokes vertical suspension and paralysis after 6 minutes. In Conus parius (Cone snail), this protein is Conotoxin pr6b.